The following is a 287-amino-acid chain: Uroplakin-3a (287 aa).

The signal sequence occupies residues 1-18; sequence MPPLWALLALGCLRFGSA. Residues 19–207 lie on the Lumenal side of the membrane; it reads VNLQPQLASV…DTWPGRRSGG (189 aa). N-linked (GlcNAc...) asparagine glycans are attached at residues asparagine 74, asparagine 139, and asparagine 170. Residues 208 to 235 form a helical membrane-spanning segment; that stretch reads MIVITSILGSLPFFLLVGFAGAIALSLV. Residues 236 to 287 are Cytoplasmic-facing; sequence DMGSSDGETTHDSQITQEAVPKSLGASESSYTSVNRGPPLDRAEVYSSKLQD. Residues 242–287 form a disordered region; it reads GETTHDSQITQEAVPKSLGASESSYTSVNRGPPLDRAEVYSSKLQD. Positions 261–270 are enriched in polar residues; that stretch reads ASESSYTSVN.

The protein belongs to the uroplakin-3 family. In terms of assembly, heterodimer with uroplakin-1B (UPK1B). As to expression, expressed in ureter.

The protein resides in the endoplasmic reticulum membrane. Component of the asymmetric unit membrane (AUM); a highly specialized biomembrane elaborated by terminally differentiated urothelial cells. May play an important role in AUM-cytoskeleton interaction in terminally differentiated urothelial cells. It also contributes to the formation of urothelial glycocalyx which may play an important role in preventing bacterial adherence. The protein is Uroplakin-3a (UPK3A) of Homo sapiens (Human).